Consider the following 899-residue polypeptide: Translation initiation factor IF-2 (899 aa).

Disordered stretches follow at residues Lys65–Ile84 and Thr91–Lys310. Residues Ser68–Val82 are compositionally biased toward polar residues. Residues Gln108–Val164 are compositionally biased toward basic and acidic residues. The segment covering Thr165–Lys174 has biased composition (polar residues). Residues Gln177–Asp236 show a composition bias toward basic and acidic residues. Residues Ser262–Asn276 are compositionally biased toward basic residues. A compositionally biased stretch (basic and acidic residues) spans Arg277–Ala290. Residues Ala398–Lys567 form the tr-type G domain. The G1 stretch occupies residues Gly407–Thr414. Gly407 to Thr414 contacts GTP. The segment at Gly432–His436 is G2. The tract at residues Asp453–Gly456 is G3. GTP-binding positions include Asp453–His457 and Asn507–Asp510. The tract at residues Asn507–Asp510 is G4. The interval Ser543–Lys545 is G5.

The protein belongs to the TRAFAC class translation factor GTPase superfamily. Classic translation factor GTPase family. IF-2 subfamily.

It localises to the cytoplasm. One of the essential components for the initiation of protein synthesis. Protects formylmethionyl-tRNA from spontaneous hydrolysis and promotes its binding to the 30S ribosomal subunits. Also involved in the hydrolysis of GTP during the formation of the 70S ribosomal complex. The polypeptide is Translation initiation factor IF-2 (Pectobacterium carotovorum subsp. carotovorum (strain PC1)).